A 906-amino-acid polypeptide reads, in one-letter code: Alanine--tRNA ligase, chloroplastic/mitochondrial (906 aa).

Residues 1 to 10 (MSAATERERL) show a composition bias toward basic and acidic residues. The interval 1–22 (MSAATERERLTNANPNARGKDN) is disordered. Residues histidine 589, histidine 593, cysteine 691, and histidine 695 each coordinate Zn(2+).

This sequence belongs to the class-II aminoacyl-tRNA synthetase family. Monomer. The cofactor is Zn(2+).

Its subcellular location is the plastid. It localises to the chloroplast. The protein resides in the mitochondrion. It carries out the reaction tRNA(Ala) + L-alanine + ATP = L-alanyl-tRNA(Ala) + AMP + diphosphate. In terms of biological role, catalyzes the attachment of alanine to tRNA(Ala) in a two-step reaction: alanine is first activated by ATP to form Ala-AMP and then transferred to the acceptor end of tRNA(Ala). Also edits incorrectly charged tRNA(Ala) via its editing domain. The sequence is that of Alanine--tRNA ligase, chloroplastic/mitochondrial from Ostreococcus lucimarinus (strain CCE9901).